The following is a 285-amino-acid chain: (3S)-malyl-CoA thioesterase (285 aa).

Residues arginine 70 and glutamate 122 each contribute to the substrate site. Positions 122 and 148 each coordinate Mg(2+).

It belongs to the HpcH/HpaI aldolase family. As to quaternary structure, homodimer or homotrimer. The cofactor is Mg(2+).

It catalyses the reaction (S)-malyl-CoA + H2O = (S)-malate + CoA + H(+). Its function is as follows. Catalyzes the hydrolysis of (3S)-malyl-CoA to (3S)-malate and free CoA. Inactive towards beta-methylmalyl-CoA and other CoA esters. The protein is (3S)-malyl-CoA thioesterase of Cereibacter sphaeroides (strain ATCC 17025 / ATH 2.4.3) (Rhodobacter sphaeroides).